Reading from the N-terminus, the 434-residue chain is MTASSAKPASSVDSFFSATLAEADPEIAAAIKGELGRQRHEIELIASENIVSRAVLEAQGSVMTNKYAEGYPGARYYGGCEWVDVAENLAIDRAKKLFGANFANVQPNSGSQMNQAVFLALLQPGDTFMGLDLAAGGHLTHGSPVNMSGKWFKAAHYTVRRDDHLIDMDAVAKQAEEVKPKLIIAGGSAYSRPWDFKRFREIADHVGAYLLVDMAHFAGLVAGGAHASPVPHAHIVTTTTHKSLRGPRGGLILWNDEQFTKKLNSAIFPGLQGGPLMHVIAAKAVAFAEALRPEFKTYAKNIVENAKALAESLRAQGFDIVSGGTDNHLMLVDLRPKGLKGNVSEKALVRAGITCNKNGIPFDPEKPFVTSGLRLGTPAATTRGFGVAEFQQVGSLIAEVLNAIAQAPDGSAPLVEAAVKAKVKALTDRFPIYQ.

(6S)-5,6,7,8-tetrahydrofolate-binding positions include leucine 133 and 137-139 (GHL). Position 242 is an N6-(pyridoxal phosphate)lysine (lysine 242).

This sequence belongs to the SHMT family. In terms of assembly, homodimer. It depends on pyridoxal 5'-phosphate as a cofactor.

It localises to the cytoplasm. The catalysed reaction is (6R)-5,10-methylene-5,6,7,8-tetrahydrofolate + glycine + H2O = (6S)-5,6,7,8-tetrahydrofolate + L-serine. It participates in one-carbon metabolism; tetrahydrofolate interconversion. The protein operates within amino-acid biosynthesis; glycine biosynthesis; glycine from L-serine: step 1/1. Catalyzes the reversible interconversion of serine and glycine with tetrahydrofolate (THF) serving as the one-carbon carrier. This reaction serves as the major source of one-carbon groups required for the biosynthesis of purines, thymidylate, methionine, and other important biomolecules. Also exhibits THF-independent aldolase activity toward beta-hydroxyamino acids, producing glycine and aldehydes, via a retro-aldol mechanism. The chain is Serine hydroxymethyltransferase from Bradyrhizobium sp. (strain BTAi1 / ATCC BAA-1182).